A 208-amino-acid polypeptide reads, in one-letter code: Large ribosomal subunit protein bL25 (208 aa).

The disordered stretch occupies residues 184-208 (VTISGTSSDQDTSGGESSGTTTSED). Positions 187–208 (SGTSSDQDTSGGESSGTTTSED) are enriched in low complexity.

This sequence belongs to the bacterial ribosomal protein bL25 family. CTC subfamily. As to quaternary structure, part of the 50S ribosomal subunit; part of the 5S rRNA/L5/L18/L25 subcomplex. Contacts the 5S rRNA. Binds to the 5S rRNA independently of L5 and L18.

This is one of the proteins that binds to the 5S RNA in the ribosome where it forms part of the central protuberance. This Ehrlichia ruminantium (strain Gardel) protein is Large ribosomal subunit protein bL25.